We begin with the raw amino-acid sequence, 214 residues long: Protein verrocchio (214 aa).

Probably homomultimerizes. Component of the MTV complex, composed of moi/modigliani, tea and ver/verrocchio. Interacts with moi/modigliani and tea (via C-terminus); the interactions are direct and require fully intact moi/modigliani and ver/verrocchio. The MTV complex is recruited to telomeres by the HipHop-HOAP complex, consisting of HipHop, cav/HOAP and Su(var)205/HP1 to form the terminin telomere-capping complex. Interacts with cav/HOAP; the interaction is direct. Interacts with Su(var)205/HP1; the interaction is indirect and probably requires cav/HOAP or moi/modigliani. Probably interacts with peo (via N-terminus and UBC domain).

It is found in the nucleus. Its subcellular location is the chromosome. It localises to the telomere. Its function is as follows. Part of the MTV complex that associates with the HipHop-HOAP complex to form the terminin telomere-capping complex involved in telomere maintenance and prevention of telomere fusion. As part of the MTV complex binds single stranded DNA in a sequence-independent manner, protecting it from degradation. This Drosophila melanogaster (Fruit fly) protein is Protein verrocchio.